The chain runs to 244 residues: Acetoacetate decarboxylase (244 aa).

Lys-115 (schiff-base intermediate with acetoacetate) is an active-site residue.

This sequence belongs to the ADC family. Homododecamer.

It catalyses the reaction acetoacetate + H(+) = acetone + CO2. Functionally, catalyzes the conversion of acetoacetate to acetone and carbon dioxide. The polypeptide is Acetoacetate decarboxylase (Clostridium acetobutylicum (strain ATCC 824 / DSM 792 / JCM 1419 / IAM 19013 / LMG 5710 / NBRC 13948 / NRRL B-527 / VKM B-1787 / 2291 / W)).